We begin with the raw amino-acid sequence, 619 residues long: Probable ATP-dependent RNA helicase DDX59 (619 aa).

A Glycyl lysine isopeptide (Lys-Gly) (interchain with G-Cter in SUMO2) cross-link involves residue lysine 26. A disordered region spans residues 57–98; sequence SESCPFPSPGGQLAEVHSVSPEQGAKDSHPSEEPVKSFSKTQ. A phosphoserine mark is found at serine 64 and serine 76. The segment covering 80–91 has biased composition (basic and acidic residues); that stretch reads GAKDSHPSEEPV. Residues 104–133 form an HIT-type zinc finger; sequence GEPICVVCGRYGEYICDKTDEDVCSLECKA. Residues 142–161 are disordered; the sequence is KEEKSKLSNPQKADSEPESP. Residues serine 156 and serine 160 each carry the phosphoserine modification. Residues 203–231 carry the Q motif motif; that stretch reads IDFEHCSLPEVLNHNLKKSGYEVPTPIQM. Positions 234–405 constitute a Helicase ATP-binding domain; that stretch reads IPVGLLGRDI…SQLLHNPVRI (172 aa). 247–254 contacts ATP; it reads ADTGSGKT. Residues 353 to 356 carry the DEAD box motif; that stretch reads DEAD. The 164-residue stretch at 416 to 579 folds into the Helicase C-terminal domain; sequence NVRQIILWVE…ILPPQLLNSP (164 aa).

It belongs to the DEAD box helicase family. DDX59 subfamily. In terms of assembly, interacts (via HIT-type zinc finger) with the RUVBL1/RUVBL2 complex in the presence of ADP. As to expression, expressed in fibroblasts (at protein level).

Its subcellular location is the cytoplasm. The protein resides in the nucleus. It carries out the reaction ATP + H2O = ADP + phosphate + H(+). This chain is Probable ATP-dependent RNA helicase DDX59 (DDX59), found in Homo sapiens (Human).